Consider the following 334-residue polypeptide: N-acetyl-gamma-glutamyl-phosphate reductase (334 aa).

C154 is a catalytic residue.

Belongs to the NAGSA dehydrogenase family. Type 1 subfamily.

It localises to the cytoplasm. It catalyses the reaction N-acetyl-L-glutamate 5-semialdehyde + phosphate + NADP(+) = N-acetyl-L-glutamyl 5-phosphate + NADPH + H(+). The protein operates within amino-acid biosynthesis; L-arginine biosynthesis; N(2)-acetyl-L-ornithine from L-glutamate: step 3/4. Functionally, catalyzes the NADPH-dependent reduction of N-acetyl-5-glutamyl phosphate to yield N-acetyl-L-glutamate 5-semialdehyde. The protein is N-acetyl-gamma-glutamyl-phosphate reductase of Buchnera aphidicola subsp. Schizaphis graminum (strain Sg).